Consider the following 763-residue polypeptide: Translation initiation factor IF-2, chloroplastic (763 aa).

3 disordered regions span residues 1-22 (MFLN…NNSS), 52-122 (IDKS…SNSA), and 149-168 (NNKI…DQSI). Low complexity predominate over residues 13–22 (SSYSTNNNSS). Residues 73 to 92 (RIDKKNKNFNKAHDLLDNKK) show a composition bias toward basic and acidic residues. Over residues 93 to 104 (NKNRQRKKIKNK) the composition is skewed to basic residues. Residues 151–168 (KIPQQKKQQVASSIDQSI) show a composition bias toward polar residues. The tr-type G domain maps to 261–429 (NRPPVVTILG…ILLLAELENL (169 aa)). GTP-binding positions include 270–277 (GHVDHGKT), 316–320 (DTPGH), and 370–373 (SKID).

Belongs to the TRAFAC class translation factor GTPase superfamily. Classic translation factor GTPase family. IF-2 subfamily.

The protein localises to the plastid. The protein resides in the chloroplast. One of the essential components for the initiation of protein synthesis. Protects formylmethionyl-tRNA from spontaneous hydrolysis and promotes its binding to the 30S ribosomal subunits. Also involved in the hydrolysis of GTP during the formation of the 70S ribosomal complex. This Porphyra purpurea (Red seaweed) protein is Translation initiation factor IF-2, chloroplastic (infB).